Here is a 320-residue protein sequence, read N- to C-terminus: Acetyl-coenzyme A carboxylase carboxyl transferase subunit alpha (320 aa).

One can recognise a CoA carboxyltransferase C-terminal domain in the interval 41 to 295 (KIEEKAQQAL…GDAIAAAFAE (255 aa)).

Belongs to the AccA family. Acetyl-CoA carboxylase is a heterohexamer composed of biotin carboxyl carrier protein (AccB), biotin carboxylase (AccC) and two subunits each of ACCase subunit alpha (AccA) and ACCase subunit beta (AccD).

It is found in the cytoplasm. It carries out the reaction N(6)-carboxybiotinyl-L-lysyl-[protein] + acetyl-CoA = N(6)-biotinyl-L-lysyl-[protein] + malonyl-CoA. The protein operates within lipid metabolism; malonyl-CoA biosynthesis; malonyl-CoA from acetyl-CoA: step 1/1. Functionally, component of the acetyl coenzyme A carboxylase (ACC) complex. First, biotin carboxylase catalyzes the carboxylation of biotin on its carrier protein (BCCP) and then the CO(2) group is transferred by the carboxyltransferase to acetyl-CoA to form malonyl-CoA. The polypeptide is Acetyl-coenzyme A carboxylase carboxyl transferase subunit alpha (Rhodopseudomonas palustris (strain ATCC BAA-98 / CGA009)).